A 295-amino-acid polypeptide reads, in one-letter code: MTMTEEKPTSDGKGGWGFFKIPFRNSSGHRNAASSAATSPFPSGASSSSTSSHLHNHHQHHHQHHHQHHHQLGYNGPHGDGSGQNQHPTPSPSVSSVAKSFLPTKRRLKLDPSEKLYFPYEPGKQVRSAIKIKNTSKSHVAFKFQTTAPKSCFMRPPGAILAPGETIIATVFKFVEPPENNEKPMDQRSRVKFKIMSLKVKGPMDYVPELFDEQKDDVSKEQILRVIFLDPERSNPALEKLKRQLAEADAAVEARKKPPEETGPKMIGEGLVIDEWKERRERYLAQQQGEGADSV.

A compositionally biased stretch (basic and acidic residues) spans 1 to 10; that stretch reads MTMTEEKPTS. Positions 1–99 are disordered; the sequence is MTMTEEKPTS…PSPSVSSVAK (99 aa). Residues 31 to 53 are compositionally biased toward low complexity; sequence NAASSAATSPFPSGASSSSTSSH. The span at 54-71 shows a compositional bias: basic residues; it reads LHNHHQHHHQHHHQHHHQ. The segment covering 83-98 has biased composition (polar residues); sequence GQNQHPTPSPSVSSVA. One can recognise an MSP domain in the interval 107 to 229; the sequence is RLKLDPSEKL…KEQILRVIFL (123 aa). Basic and acidic residues predominate over residues 249 to 263; the sequence is DAAVEARKKPPEETG. The segment at 249 to 270 is disordered; the sequence is DAAVEARKKPPEETGPKMIGEG. At S294 the chain carries Phosphoserine.

Belongs to the VAMP-associated protein (VAP) (TC 9.B.17) family.

Functionally, may play a role in vesicle trafficking. The polypeptide is Vesicle-associated protein 4-2 (PVA42) (Arabidopsis thaliana (Mouse-ear cress)).